Reading from the N-terminus, the 249-residue chain is Aspartate/glutamate leucyltransferase (249 aa).

The protein belongs to the R-transferase family. Bpt subfamily.

The protein localises to the cytoplasm. The catalysed reaction is N-terminal L-glutamyl-[protein] + L-leucyl-tRNA(Leu) = N-terminal L-leucyl-L-glutamyl-[protein] + tRNA(Leu) + H(+). It catalyses the reaction N-terminal L-aspartyl-[protein] + L-leucyl-tRNA(Leu) = N-terminal L-leucyl-L-aspartyl-[protein] + tRNA(Leu) + H(+). In terms of biological role, functions in the N-end rule pathway of protein degradation where it conjugates Leu from its aminoacyl-tRNA to the N-termini of proteins containing an N-terminal aspartate or glutamate. In Xanthobacter autotrophicus (strain ATCC BAA-1158 / Py2), this protein is Aspartate/glutamate leucyltransferase.